The primary structure comprises 270 residues: S-adenosylmethionine decarboxylase proenzyme (270 aa).

Ser117 (schiff-base intermediate with substrate; via pyruvic acid) is an active-site residue. Ser117 carries the post-translational modification Pyruvic acid (Ser); by autocatalysis. Catalysis depends on His122, which acts as the Proton acceptor; for processing activity. Cys145 acts as the Proton donor; for catalytic activity in catalysis.

Belongs to the prokaryotic AdoMetDC family. Type 2 subfamily. Heterooctamer of four alpha and four beta chains arranged as a tetramer of alpha/beta heterodimers. Requires pyruvate as cofactor. In terms of processing, is synthesized initially as an inactive proenzyme. Formation of the active enzyme involves a self-maturation process in which the active site pyruvoyl group is generated from an internal serine residue via an autocatalytic post-translational modification. Two non-identical subunits are generated from the proenzyme in this reaction, and the pyruvate is formed at the N-terminus of the alpha chain, which is derived from the carboxyl end of the proenzyme. The post-translation cleavage follows an unusual pathway, termed non-hydrolytic serinolysis, in which the side chain hydroxyl group of the serine supplies its oxygen atom to form the C-terminus of the beta chain, while the remainder of the serine residue undergoes an oxidative deamination to produce ammonia and the pyruvoyl group blocking the N-terminus of the alpha chain.

It catalyses the reaction S-adenosyl-L-methionine + H(+) = S-adenosyl 3-(methylsulfanyl)propylamine + CO2. The protein operates within amine and polyamine biosynthesis; S-adenosylmethioninamine biosynthesis; S-adenosylmethioninamine from S-adenosyl-L-methionine: step 1/1. Its function is as follows. Catalyzes the decarboxylation of S-adenosylmethionine to S-adenosylmethioninamine (dcAdoMet), the propylamine donor required for the synthesis of the polyamines spermine and spermidine from the diamine putrescine. This chain is S-adenosylmethionine decarboxylase proenzyme, found in Pseudoalteromonas translucida (strain TAC 125).